Here is a 559-residue protein sequence, read N- to C-terminus: BTB/POZ domain-containing protein At5g47800 (559 aa).

The 69-residue stretch at 28–96 folds into the BTB domain; it reads NDLVIRINNT…CYDITINLSA (69 aa). One can recognise an NPH3 domain in the interval 199 to 476; it reads DWWTEDISDL…VQALFFDQES (278 aa). Position 417 is a phosphotyrosine (tyrosine 417). The span at 477–489 shows a compositional bias: low complexity; sequence GSKGASSRSESQE. 2 disordered regions span residues 477-502 and 524-559; these read GSKGASSRSESQELFTRGKETPTDEH and EGCKRGEEKTRSSTDPKKIVWKGTGSEHKHHISRDR. Composition is skewed to basic and acidic residues over residues 492 to 502 and 524 to 541; these read TRGKETPTDEH and EGCKRGEEKTRSSTDPKK.

This sequence belongs to the NPH3 family.

The protein operates within protein modification; protein ubiquitination. In terms of biological role, may act as a substrate-specific adapter of an E3 ubiquitin-protein ligase complex (CUL3-RBX1-BTB) which mediates the ubiquitination and subsequent proteasomal degradation of target proteins. This chain is BTB/POZ domain-containing protein At5g47800, found in Arabidopsis thaliana (Mouse-ear cress).